A 128-amino-acid chain; its full sequence is S-adenosylmethionine decarboxylase proenzyme (128 aa).

Ser-63 functions as the Schiff-base intermediate with substrate; via pyruvic acid in the catalytic mechanism. At Ser-63 the chain carries Pyruvic acid (Ser); by autocatalysis. His-68 (proton acceptor; for processing activity) is an active-site residue. Cys-83 (proton donor; for catalytic activity) is an active-site residue.

This sequence belongs to the prokaryotic AdoMetDC family. Type 1 subfamily. As to quaternary structure, heterotetramer of two alpha and two beta chains arranged as a dimer of alpha/beta heterodimers. Pyruvate serves as cofactor. In terms of processing, is synthesized initially as an inactive proenzyme. Formation of the active enzyme involves a self-maturation process in which the active site pyruvoyl group is generated from an internal serine residue via an autocatalytic post-translational modification. Two non-identical subunits are generated from the proenzyme in this reaction, and the pyruvate is formed at the N-terminus of the alpha chain, which is derived from the carboxyl end of the proenzyme. The post-translation cleavage follows an unusual pathway, termed non-hydrolytic serinolysis, in which the side chain hydroxyl group of the serine supplies its oxygen atom to form the C-terminus of the beta chain, while the remainder of the serine residue undergoes an oxidative deamination to produce ammonia and the pyruvoyl group blocking the N-terminus of the alpha chain.

The enzyme catalyses S-adenosyl-L-methionine + H(+) = S-adenosyl 3-(methylsulfanyl)propylamine + CO2. The protein operates within amine and polyamine biosynthesis; S-adenosylmethioninamine biosynthesis; S-adenosylmethioninamine from S-adenosyl-L-methionine: step 1/1. Its function is as follows. Catalyzes the decarboxylation of S-adenosylmethionine to S-adenosylmethioninamine (dcAdoMet), the propylamine donor required for the synthesis of the polyamines spermine and spermidine from the diamine putrescine. This chain is S-adenosylmethionine decarboxylase proenzyme, found in Leptospira borgpetersenii serovar Hardjo-bovis (strain JB197).